The chain runs to 1261 residues: ABC-type transmembrane transporter verA (1261 aa).

A helical membrane pass occupies residues 41-61 (IGCAFAAVCSGAAMPLMALIL). Residues 41-334 (IGCAFAAVCS…LGPNMPSFIK (294 aa)) enclose the ABC transmembrane type-1 1 domain. An N-linked (GlcNAc...) asparagine glycan is attached at asparagine 67. The next 5 membrane-spanning stretches (helical) occupy residues 92-112 (LWFV…SFGF), 166-186 (LGIM…AFSQ), 190-210 (LTLV…FIVS), 270-290 (FVGL…AIGF), and 308-328 (ILSV…LGPN). Positions 374-618 (VELRDMSFAY…GGLYKRLYDA (245 aa)) constitute an ABC transporter 1 domain. A glycan (N-linked (GlcNAc...) asparagine) is linked at asparagine 396. An ATP-binding site is contributed by 409-416 (GPSGAGKS). Residue asparagine 463 is glycosylated (N-linked (GlcNAc...) asparagine). 6 helical membrane passes run 686 to 706 (YWPI…IFPV), 734 to 754 (LMFF…GFFM), 808 to 828 (MGLL…GLAY), 830 to 850 (WKFA…AGYL), 913 to 933 (VMTL…ALGF), and 950 to 970 (FFTV…LFGF). An ABC transmembrane type-1 2 domain is found at 691-976 (LIGLVACVVT…LFGFSSNLGK (286 aa)). N-linked (GlcNAc...) asparagine glycosylation is found at asparagine 1007 and asparagine 1021. Residues 1017-1255 (VDMQNVTFAY…QGNYFKMHES (239 aa)) enclose the ABC transporter 2 domain. 1052–1059 (GTSGSGKS) contributes to the ATP binding site. A glycan (N-linked (GlcNAc...) asparagine) is linked at asparagine 1106.

It belongs to the ABC transporter superfamily. ABCB family. Multidrug resistance exporter (TC 3.A.1.201) subfamily.

The protein localises to the cell membrane. ABC-type transmembrane transporter; part of the gene cluster that mediates the biosynthesis of 11'-deoxyverticillin A, one of the dimeric epipolythiodioxopiperazines (ETPs) from the verticillin family that are toxic secondary metabolites. The verA multidrug transporter is probably involved in the secretion of 11'-deoxyverticillin A. The protein is ABC-type transmembrane transporter verA of Clonostachys rogersoniana.